The chain runs to 729 residues: MSKFIEPSVEEIKLEKVYQDMGLSDQEYEKVCDILGRQPNFTETGIFSVMWSEHCSYKHSKPFLKQFPTSGDHVLMGPGEGAGVVDIGDNQAVVFKVESHNHPSAIEPYQGAATGVGGIIRDIVSIGARPINLLNSLRFGELDNKQNQRLLKGVVKGIGGYGNCIGIPTTAGEIEFDERYDGNPLVNAMCVGVINHDMIQKGTAKGVGNSVIYVGLKTGRDGIHGATFASEELTEESESKRPSVQIGDPFVGKKLMEATLEAITFDELVGIQDMGAAGLTSSSSEMAAKGGSGLHLRLEQVPTREPGISPYEMMLSETQERMLLVVEKGTEQKFLDLFDKHELDSAVIGEVTDTNRFVLTYDDEVYADIPVEPLADEAPVYILEGEEKDYNTSKNDYTHIDVKDTFFKLLKHPTIASKHYLYDQYDQQVGANTIIKPGLQASVVRVEGTNKAIASTIDGEARYVYNNPYEGGKMVVAEAYRNLIAVGATPLAMTDCLNYGSPEKKEIYQQLIDSTKGMAEACDILKTPVVSGNVSLYNETKGTSIFPTPVVGMVGLIENVNYLNDFEPQVGDKLYLIGDTKDDFGGSQLEKLIYGKVNHEFESLDLSSEVEKGESIKTAIREGLLSHVQTVGKGGLLITLAKLSAHYGLGLKSSIDITNAQLFSETQGRYVVSVKSGKTLNIDNAIEIGLLTDSDNFKVTTPYTEISENVSDIKQIWEGAIAQCLTTQD.

Histidine 54 is a catalytic residue. Residues tyrosine 57 and lysine 96 each coordinate ATP. Residue glutamate 98 coordinates Mg(2+). Substrate-binding positions include 99–102 and arginine 121; that span reads SHNH. Residue histidine 100 is the Proton acceptor of the active site. Residue aspartate 122 coordinates Mg(2+). Glutamine 245 is a binding site for substrate. Aspartate 273 is a Mg(2+) binding site. Substrate is bound at residue 317–319; sequence ETQ. The ATP site is built by aspartate 495 and glycine 532. A Mg(2+)-binding site is contributed by asparagine 533. Serine 535 lines the substrate pocket.

Belongs to the FGAMS family. Monomer. Part of the FGAM synthase complex composed of 1 PurL, 1 PurQ and 2 PurS subunits.

It localises to the cytoplasm. It catalyses the reaction N(2)-formyl-N(1)-(5-phospho-beta-D-ribosyl)glycinamide + L-glutamine + ATP + H2O = 2-formamido-N(1)-(5-O-phospho-beta-D-ribosyl)acetamidine + L-glutamate + ADP + phosphate + H(+). It functions in the pathway purine metabolism; IMP biosynthesis via de novo pathway; 5-amino-1-(5-phospho-D-ribosyl)imidazole from N(2)-formyl-N(1)-(5-phospho-D-ribosyl)glycinamide: step 1/2. Part of the phosphoribosylformylglycinamidine synthase complex involved in the purines biosynthetic pathway. Catalyzes the ATP-dependent conversion of formylglycinamide ribonucleotide (FGAR) and glutamine to yield formylglycinamidine ribonucleotide (FGAM) and glutamate. The FGAM synthase complex is composed of three subunits. PurQ produces an ammonia molecule by converting glutamine to glutamate. PurL transfers the ammonia molecule to FGAR to form FGAM in an ATP-dependent manner. PurS interacts with PurQ and PurL and is thought to assist in the transfer of the ammonia molecule from PurQ to PurL. The sequence is that of Phosphoribosylformylglycinamidine synthase subunit PurL from Staphylococcus aureus (strain USA300).